The following is a 179-amino-acid chain: Large ribosomal subunit protein uL5 (179 aa).

It belongs to the universal ribosomal protein uL5 family. Part of the 50S ribosomal subunit; part of the 5S rRNA/L5/L18/L25 subcomplex. Contacts the 5S rRNA and the P site tRNA. Forms a bridge to the 30S subunit in the 70S ribosome.

In terms of biological role, this is one of the proteins that bind and probably mediate the attachment of the 5S RNA into the large ribosomal subunit, where it forms part of the central protuberance. In the 70S ribosome it contacts protein S13 of the 30S subunit (bridge B1b), connecting the 2 subunits; this bridge is implicated in subunit movement. Contacts the P site tRNA; the 5S rRNA and some of its associated proteins might help stabilize positioning of ribosome-bound tRNAs. In Shewanella amazonensis (strain ATCC BAA-1098 / SB2B), this protein is Large ribosomal subunit protein uL5.